A 427-amino-acid chain; its full sequence is MAIQRPKGTNDLLPSGSPKTEAFQRAAAHEWLIAQAREVLERAGAQRIDTPMFEEAELVKRGVGGSTDIVRKEMFTVYYFGDHGGYVLRPEGTASIVRAYLENGLKQLPAPLKLWTSGPMFRAERHQKGRYRQFTQVDYEVLGSADALVDAEAIALMVAVVQKLGLRGVRVKLGSIGDPEDRERYNAYLRDLFSPHLGRLSDDSKDRLERNPMRILDSKSASDQELLAELSVRPMLDFLGEGAAADFRQVQAYLSDWGVPFDLDPSIVRGLDYYRRTAWELHYEGIGAKSALGGGGRYDGLSEQLGGGSVPGIGWAFGVERLLLALEQEGIEIPGSGGPQLYVAALDEENVPLAARVALAARASCRAEFAYRAMKPGSAFKDAERRGAVWVGLIGSEEAAAGTLSLKNLHTGEQKTVPVGELGQALA.

It belongs to the class-II aminoacyl-tRNA synthetase family. As to quaternary structure, homodimer.

Its subcellular location is the cytoplasm. It carries out the reaction tRNA(His) + L-histidine + ATP = L-histidyl-tRNA(His) + AMP + diphosphate + H(+). This Deinococcus radiodurans (strain ATCC 13939 / DSM 20539 / JCM 16871 / CCUG 27074 / LMG 4051 / NBRC 15346 / NCIMB 9279 / VKM B-1422 / R1) protein is Histidine--tRNA ligase.